Reading from the N-terminus, the 100-residue chain is MIQTITHIMIISSLIIFGIALIICLFRLIKGPTTADRVVTFDTTSAVVMSIVGVLSVLMGTVSFLDSIMLIAIISFVSSVSISRFIGGGHVFNGNNKRNL.

The next 3 membrane-spanning stretches (helical) occupy residues 5-25 (ITHI…IICL), 38-60 (VVTF…VLMG), and 70-92 (LIAI…GHVF).

This sequence belongs to the CPA3 antiporters (TC 2.A.63) subunit F family. May form a heterooligomeric complex that consists of seven subunits: mnhA2, mnhB2, mnhC2, mnhD2, mnhE2, mnhF2 and mnhG2.

The protein resides in the cell membrane. The sequence is that of Putative antiporter subunit mnhF2 (mnhF2) from Staphylococcus aureus (strain USA300).